The chain runs to 319 residues: Lipoyl synthase (319 aa).

7 residues coordinate [4Fe-4S] cluster: Cys-61, Cys-66, Cys-72, Cys-87, Cys-91, Cys-94, and Ser-300. The region spanning 73 to 289 is the Radical SAM core domain; that stretch reads WDKKHATFMI…ESVAYSKGFL (217 aa).

It belongs to the radical SAM superfamily. Lipoyl synthase family. [4Fe-4S] cluster is required as a cofactor.

It is found in the cytoplasm. The catalysed reaction is [[Fe-S] cluster scaffold protein carrying a second [4Fe-4S](2+) cluster] + N(6)-octanoyl-L-lysyl-[protein] + 2 oxidized [2Fe-2S]-[ferredoxin] + 2 S-adenosyl-L-methionine + 4 H(+) = [[Fe-S] cluster scaffold protein] + N(6)-[(R)-dihydrolipoyl]-L-lysyl-[protein] + 4 Fe(3+) + 2 hydrogen sulfide + 2 5'-deoxyadenosine + 2 L-methionine + 2 reduced [2Fe-2S]-[ferredoxin]. It participates in protein modification; protein lipoylation via endogenous pathway; protein N(6)-(lipoyl)lysine from octanoyl-[acyl-carrier-protein]: step 2/2. In terms of biological role, catalyzes the radical-mediated insertion of two sulfur atoms into the C-6 and C-8 positions of the octanoyl moiety bound to the lipoyl domains of lipoate-dependent enzymes, thereby converting the octanoylated domains into lipoylated derivatives. The protein is Lipoyl synthase of Rhodopseudomonas palustris (strain BisB18).